A 186-amino-acid chain; its full sequence is MAAEDPSVSGVSGRYATALFELARDEKSVDAVKADLDKFNALLDESADLKRLVRSPVFGADTQLKALNAVLDKAGIAGVAANVLRVLTTNRRLFAVADVIRAFNALVAKYKGEATADVTVAEPISDKNLDALKAALKTVTGKDVALNVKVDPAIIGGLVVKLGSRMIDSSLRTKLNSIKHAMKEAG.

The protein belongs to the ATPase delta chain family. F-type ATPases have 2 components, F(1) - the catalytic core - and F(0) - the membrane proton channel. F(1) has five subunits: alpha(3), beta(3), gamma(1), delta(1), epsilon(1). CF(0) has four main subunits: a(1), b(1), b'(1) and c(10-14). The alpha and beta chains form an alternating ring which encloses part of the gamma chain. F(1) is attached to F(0) by a central stalk formed by the gamma and epsilon chains, while a peripheral stalk is formed by the delta, b and b' chains.

It is found in the cell inner membrane. Functionally, f(1)F(0) ATP synthase produces ATP from ADP in the presence of a proton or sodium gradient. F-type ATPases consist of two structural domains, F(1) containing the extramembraneous catalytic core and F(0) containing the membrane proton channel, linked together by a central stalk and a peripheral stalk. During catalysis, ATP synthesis in the catalytic domain of F(1) is coupled via a rotary mechanism of the central stalk subunits to proton translocation. This protein is part of the stalk that links CF(0) to CF(1). It either transmits conformational changes from CF(0) to CF(1) or is implicated in proton conduction. The polypeptide is ATP synthase subunit delta (Bradyrhizobium sp. (strain ORS 278)).